A 441-amino-acid chain; its full sequence is EMI domain-containing protein 1 (441 aa).

The first 22 residues, 1–22, serve as a signal peptide directing secretion; the sequence is MGGPRAWALLCLGLLLPGGGAA. The region spanning 33 to 106 is the EMI domain; it reads RRNWCSYVVT…PGHSGVSCEE (74 aa). Cystine bridges form between Cys-37–Cys-96, Cys-62–Cys-68, and Cys-95–Cys-104. Thr-42 carries O-linked (Fuc) threonine glycosylation. N-linked (GlcNAc...) asparagine glycosylation occurs at Asn-51. A glycan (N-linked (GlcNAc...) asparagine) is linked at Asn-136. 2 disordered regions span residues 162-371 and 405-441; these read QPVP…KSHW and SGAG…DERG. Composition is skewed to pro residues over residues 163–184 and 222–231; these read PVPP…PPAQ and PPGPQGPPGS. The Collagen-like domain occupies 179-368; that stretch reads GPPPAQGSPG…PGPKGDPGEK (190 aa). The span at 232–243 shows a compositional bias: low complexity; the sequence is PGRAGAVGTPGE. Positions 244–264 are enriched in pro residues; the sequence is RGPPGPPGPPGPPGPPAPVGP. Positions 277-288 are enriched in polar residues; the sequence is LSNTFTETNNHW. The segment covering 292 to 311 has biased composition (pro residues); the sequence is PTGPPGPPGPMGPPGPPGPT. Composition is skewed to basic and acidic residues over residues 335–344 and 359–371; these read PGEKGERGLR and PGPK…KSHW.

Homo- or heteromers. Post-translationally, O-fucosylated at Thr-42 within the EMI domain by FUT10/POFUT3 and FUT11/POFUT4.

The protein resides in the secreted. The protein localises to the extracellular space. It localises to the extracellular matrix. The sequence is that of EMI domain-containing protein 1 (EMID1) from Homo sapiens (Human).